A 311-amino-acid polypeptide reads, in one-letter code: Porphobilinogen deaminase (311 aa).

Cys-242 carries the S-(dipyrrolylmethanemethyl)cysteine modification.

It belongs to the HMBS family. As to quaternary structure, monomer. Dipyrromethane is required as a cofactor.

It carries out the reaction 4 porphobilinogen + H2O = hydroxymethylbilane + 4 NH4(+). It participates in porphyrin-containing compound metabolism; protoporphyrin-IX biosynthesis; coproporphyrinogen-III from 5-aminolevulinate: step 2/4. In terms of biological role, tetrapolymerization of the monopyrrole PBG into the hydroxymethylbilane pre-uroporphyrinogen in several discrete steps. This is Porphobilinogen deaminase from Hahella chejuensis (strain KCTC 2396).